The chain runs to 341 residues: Putative amino-acid ABC transporter-binding protein YhdW (341 aa).

The N-terminal stretch at 1-19 is a signal peptide; it reads MKKMMIATLAAASVLLAVA.

This sequence belongs to the bacterial solute-binding protein 3 family.

The protein resides in the periplasm. Its function is as follows. Probably part of the binding-protein-dependent transport system YdhWXYZ for an amino acid. In Escherichia coli O157:H7, this protein is Putative amino-acid ABC transporter-binding protein YhdW (yhdW).